An 862-amino-acid chain; its full sequence is Eukaryotic translation initiation factor 3 subunit C (862 aa).

The segment covering 1–10 (MSRFFYGGGS) has biased composition (gly residues). The segment at 1–81 (MSRFFYGGGS…DEEKTTVVKS (81 aa)) is disordered. A compositionally biased stretch (acidic residues) spans 16–52 (SSDEEELYERDEEEQSEEEESSEEEETSEEGSDDEEG). The PCI domain maps to 601–775 (FHMHINLELL…GAIVFRKGVE (175 aa)). Residues 814–862 (RDQGAGARGGRGGGRGGHARGGARFPGQQGRRPGGQQFGGGALGGAIKA) form a disordered region. Residues 819-833 (GARGGRGGGRGGHAR) are compositionally biased toward gly residues. The span at 835-844 (GARFPGQQGR) shows a compositional bias: low complexity. Positions 845 to 862 (RPGGQQFGGGALGGAIKA) are enriched in gly residues.

This sequence belongs to the eIF-3 subunit C family. Component of the eukaryotic translation initiation factor 3 (eIF-3) complex.

The protein resides in the cytoplasm. Its function is as follows. Component of the eukaryotic translation initiation factor 3 (eIF-3) complex, which is involved in protein synthesis of a specialized repertoire of mRNAs and, together with other initiation factors, stimulates binding of mRNA and methionyl-tRNAi to the 40S ribosome. The eIF-3 complex specifically targets and initiates translation of a subset of mRNAs involved in cell proliferation. This chain is Eukaryotic translation initiation factor 3 subunit C (nip1), found in Aspergillus clavatus (strain ATCC 1007 / CBS 513.65 / DSM 816 / NCTC 3887 / NRRL 1 / QM 1276 / 107).